Consider the following 574-residue polypeptide: Urease subunit alpha (574 aa).

Residues 131 to 574 enclose the Urease domain; the sequence is GAIDSHIHFI…LPMAQRYLLI (444 aa). The Ni(2+) site is built by H136, H138, and K219. An N6-carboxylysine modification is found at K219. Position 221 (H221) interacts with substrate. H248 and H274 together coordinate Ni(2+). H322 functions as the Proton donor in the catalytic mechanism. Residue D362 coordinates Ni(2+).

It belongs to the metallo-dependent hydrolases superfamily. Urease alpha subunit family. As to quaternary structure, heterotrimer of UreA (gamma), UreB (beta) and UreC (alpha) subunits. Three heterotrimers associate to form the active enzyme. It depends on Ni cation as a cofactor. Carboxylation allows a single lysine to coordinate two nickel ions.

The protein localises to the cytoplasm. The enzyme catalyses urea + 2 H2O + H(+) = hydrogencarbonate + 2 NH4(+). It functions in the pathway nitrogen metabolism; urea degradation; CO(2) and NH(3) from urea (urease route): step 1/1. The chain is Urease subunit alpha from Prochlorococcus marinus (strain MIT 9303).